The sequence spans 404 residues: Arginine biosynthesis bifunctional protein ArgJ (404 aa).

The substrate site is built by threonine 166, lysine 189, threonine 200, glutamate 280, asparagine 399, and serine 404. Threonine 200 functions as the Nucleophile in the catalytic mechanism.

Belongs to the ArgJ family. As to quaternary structure, heterotetramer of two alpha and two beta chains.

It is found in the cytoplasm. It carries out the reaction N(2)-acetyl-L-ornithine + L-glutamate = N-acetyl-L-glutamate + L-ornithine. The catalysed reaction is L-glutamate + acetyl-CoA = N-acetyl-L-glutamate + CoA + H(+). It functions in the pathway amino-acid biosynthesis; L-arginine biosynthesis; L-ornithine and N-acetyl-L-glutamate from L-glutamate and N(2)-acetyl-L-ornithine (cyclic): step 1/1. Its pathway is amino-acid biosynthesis; L-arginine biosynthesis; N(2)-acetyl-L-ornithine from L-glutamate: step 1/4. Catalyzes two activities which are involved in the cyclic version of arginine biosynthesis: the synthesis of N-acetylglutamate from glutamate and acetyl-CoA as the acetyl donor, and of ornithine by transacetylation between N(2)-acetylornithine and glutamate. The polypeptide is Arginine biosynthesis bifunctional protein ArgJ (Mycobacterium bovis (strain ATCC BAA-935 / AF2122/97)).